Here is a 396-residue protein sequence, read N- to C-terminus: Elongation factor Tu (396 aa).

The 196-residue stretch at 10–205 (KPHVNIGTIG…AVDESIPDPV (196 aa)) folds into the tr-type G domain. The interval 19–26 (GHVDHGKT) is G1. Residue 19–26 (GHVDHGKT) coordinates GTP. Threonine 26 is a binding site for Mg(2+). The G2 stretch occupies residues 62 to 66 (GITIN). The G3 stretch occupies residues 83–86 (DAPG). GTP-binding positions include 83-87 (DAPGH) and 138-141 (NKAD). The segment at 138–141 (NKAD) is G4. A G5 region spans residues 175–177 (SAL).

Belongs to the TRAFAC class translation factor GTPase superfamily. Classic translation factor GTPase family. EF-Tu/EF-1A subfamily. As to quaternary structure, monomer.

Its subcellular location is the cytoplasm. It catalyses the reaction GTP + H2O = GDP + phosphate + H(+). Functionally, GTP hydrolase that promotes the GTP-dependent binding of aminoacyl-tRNA to the A-site of ribosomes during protein biosynthesis. This chain is Elongation factor Tu, found in Rhodococcus erythropolis (strain PR4 / NBRC 100887).